The chain runs to 319 residues: Ribonucleoside-diphosphate reductase small chain (319 aa).

Fe cation is bound by residues aspartate 70, glutamate 101, and histidine 104. Residue tyrosine 108 is part of the active site. Residues glutamate 163, glutamate 197, and histidine 200 each coordinate Fe cation. The interaction with R1 stretch occupies residues 313–319; the sequence is FSLDVDF.

The protein belongs to the ribonucleoside diphosphate reductase small chain family. As to quaternary structure, interacts with RNR1/OPG080 subunit. Can interact with host RNR1 supunit. The cofactor is Fe cation.

It catalyses the reaction a 2'-deoxyribonucleoside 5'-diphosphate + [thioredoxin]-disulfide + H2O = a ribonucleoside 5'-diphosphate + [thioredoxin]-dithiol. Functionally, ribonucleoside-diphosphate reductase holoenzyme provides the precursors necessary for viral DNA synthesis. Allows virus growth in non-dividing cells. Catalyzes the biosynthesis of deoxyribonucleotides from the corresponding ribonucleotides. The polypeptide is Ribonucleoside-diphosphate reductase small chain (OPG048) (Vaccinia virus (strain Ankara) (VACV)).